Consider the following 328-residue polypeptide: Dolichyl-diphosphooligosaccharide--protein glycosyltransferase subunit MAGT1 (328 aa).

A signal peptide spans 1-22 (MLHKLLIVVFLVVCLHDMRLNG). The Extracellular portion of the chain corresponds to 23–177 (QKKKETLLSE…DVHIRVIRPP (155 aa)). The region spanning 40–168 (WVSKRAVVRL…LARWVADRTD (129 aa)) is the Thioredoxin domain. An N-linked (GlcNAc...) asparagine glycan is attached at asparagine 64. Cysteines 80 and 83 form a disulfide. The helical transmembrane segment at 178–198 (NYAGPLMLGLLLAFIGSLAYL) threads the bilayer. Over 199-202 (RRNN) the chain is Cytoplasmic. The helical transmembrane segment at 203 to 223 (LEFLFNKNVWAFSALCFVLIM) threads the bilayer. The Extracellular portion of the chain corresponds to 224–257 (TSGQMWNHIRGPPYAHKNPNTGQVSYIHGSSQAQ). Residues 258 to 278 (FVAETHIVLLFNAAVTIGMVL) form a helical membrane-spanning segment. Over 279–293 (LHEAATSGLDIVKRK) the chain is Cytoplasmic. A helical membrane pass occupies residues 294 to 314 (IMCVAGIGLVVLFFSWLLSVF). Topologically, residues 315–328 (RAKYHGYPYSFLFG) are extracellular.

The protein belongs to the OST3/OST6 family. Accessory component of the STT3B-containing form of the oligosaccharyltransferase (OST) complex.

Its subcellular location is the cell membrane. It is found in the endoplasmic reticulum. It localises to the endoplasmic reticulum membrane. It functions in the pathway protein modification; protein glycosylation. In terms of biological role, accessory component of the STT3B-containing form of the N-oligosaccharyl transferase (OST) complex which catalyzes the transfer of a high mannose oligosaccharide from a lipid-linked oligosaccharide donor to an asparagine residue within an Asn-X-Ser/Thr consensus motif in nascent polypeptide chains. Involved in N-glycosylation of STT3B-dependent substrates. Specifically required for the glycosylation of a subset of acceptor sites that are near cysteine residues; in this function seems to act redundantly with TUSC3. In its oxidized form proposed to form transient mixed disulfides with a glycoprotein substrate to facilitate access of STT3B to the unmodified acceptor site. Also has oxidoreductase-independent functions in the STT3B-containing OST complex possibly involving substrate recognition. Could indirectly play a role in Mg(2+) transport. This chain is Dolichyl-diphosphooligosaccharide--protein glycosyltransferase subunit MAGT1, found in Danio rerio (Zebrafish).